The chain runs to 83 residues: Protein Vpr (83 aa).

At S79 the chain carries Phosphoserine; by host.

In terms of assembly, interacts with human UNG.

The protein localises to the virion. It is found in the host nucleus. In terms of biological role, stimulates gene expression driven by the HIV-2 LTR. Prevents infected cells from undergoing mitosis and proliferating, by inducing arrest or delay in the G2 phase of the cell cycle. Cell cycle arrest creates a favorable environment for maximizing viral expression and production. The protein is Protein Vpr of Pan troglodytes (Chimpanzee).